Here is a 312-residue protein sequence, read N- to C-terminus: Taste receptor type 2 member 140 (312 aa).

Residues 1–9 lie on the Extracellular side of the membrane; the sequence is MKVTVECAL. Residues 10–30 form a helical membrane-spanning segment; that stretch reads LITLIVEIIIGCLGNGFIAVV. The Cytoplasmic segment spans residues 31 to 46; the sequence is NIMDWTKRRRFSLVDQ. A helical transmembrane segment spans residues 47 to 67; it reads ILTALAISRLAFVWSLLTVLV. Topologically, residues 68 to 87 are extracellular; sequence ISELHSSLLITRKMLRIINN. A helical membrane pass occupies residues 88 to 108; it reads FWTVTNHFSIWLATCLSIFYF. At 109–133 the chain is on the cytoplasmic side; it reads LKIANFSNSIFLSLRWRVKTVVSLT. The chain crosses the membrane as a helical span at residues 134–154; it reads LLVSLLLLLVNVIIINTCIVI. Topologically, residues 155-185 are extracellular; sequence SVEGYKVNMSYSSHFNNNPQISRIPLFTNTM. Asn-162 carries an N-linked (GlcNAc...) asparagine glycan. Residues 186-206 traverse the membrane as a helical segment; the sequence is FTFIPFTVTLTIFLLLIFSLW. At 207-229 the chain is on the cytoplasmic side; sequence RHLKKMQHRAKGPRDPSTTAHIK. The chain crosses the membrane as a helical span at residues 230–250; that stretch reads ALQMVVTFLFLYTIFFLALVM. At 251–264 the chain is on the extracellular side; that stretch reads QAWNNEIQSKTVFN. Residues 265–285 form a helical membrane-spanning segment; that stretch reads LVFESIALAFPSGHSCVLILG. At 286 to 312 the chain is on the cytoplasmic side; it reads NSKLRQAFLTIIWWLRSSFNAAELSSP.

The protein belongs to the G-protein coupled receptor T2R family.

It localises to the membrane. Putative taste receptor which may play a role in the perception of bitterness. The sequence is that of Taste receptor type 2 member 140 from Rattus norvegicus (Rat).